A 105-amino-acid chain; its full sequence is Urease subunit beta (105 aa).

It belongs to the urease beta subunit family. Heterotrimer of UreA (gamma), UreB (beta) and UreC (alpha) subunits. Three heterotrimers associate to form the active enzyme.

It localises to the cytoplasm. It carries out the reaction urea + 2 H2O + H(+) = hydrogencarbonate + 2 NH4(+). Its pathway is nitrogen metabolism; urea degradation; CO(2) and NH(3) from urea (urease route): step 1/1. The protein is Urease subunit beta of Marinobacter nauticus (strain ATCC 700491 / DSM 11845 / VT8) (Marinobacter aquaeolei).